The sequence spans 336 residues: Biotin synthase (336 aa).

In terms of domain architecture, Radical SAM core spans 54-281 (NAIQLSTLLS…KAMVRLSAGR (228 aa)). The [4Fe-4S] cluster site is built by cysteine 69, cysteine 73, and cysteine 76. Residues cysteine 113, cysteine 144, cysteine 204, and arginine 276 each coordinate [2Fe-2S] cluster.

It belongs to the radical SAM superfamily. Biotin synthase family. Homodimer. [4Fe-4S] cluster is required as a cofactor. Requires [2Fe-2S] cluster as cofactor.

It carries out the reaction (4R,5S)-dethiobiotin + (sulfur carrier)-SH + 2 reduced [2Fe-2S]-[ferredoxin] + 2 S-adenosyl-L-methionine = (sulfur carrier)-H + biotin + 2 5'-deoxyadenosine + 2 L-methionine + 2 oxidized [2Fe-2S]-[ferredoxin]. The protein operates within cofactor biosynthesis; biotin biosynthesis; biotin from 7,8-diaminononanoate: step 2/2. Its function is as follows. Catalyzes the conversion of dethiobiotin (DTB) to biotin by the insertion of a sulfur atom into dethiobiotin via a radical-based mechanism. The polypeptide is Biotin synthase (Burkholderia pseudomallei (strain 1710b)).